The sequence spans 123 residues: Fluoride-specific ion channel FluC (123 aa).

Transmembrane regions (helical) follow at residues leucine 5–isoleucine 25, phenylalanine 29–valine 49, leucine 65–phenylalanine 85, and isoleucine 94–glycine 114. Residues glycine 72 and threonine 75 each coordinate Na(+).

The protein belongs to the fluoride channel Fluc/FEX (TC 1.A.43) family.

Its subcellular location is the cell membrane. It catalyses the reaction fluoride(in) = fluoride(out). Its activity is regulated as follows. Na(+) is not transported, but it plays an essential structural role and its presence is essential for fluoride channel function. In terms of biological role, fluoride-specific ion channel. Important for reducing fluoride concentration in the cell, thus reducing its toxicity. The sequence is that of Fluoride-specific ion channel FluC from Methanococcus aeolicus (strain ATCC BAA-1280 / DSM 17508 / OCM 812 / Nankai-3).